Consider the following 255-residue polypeptide: Taurine import ATP-binding protein TauB (255 aa).

Residues Leu-2–Ser-229 enclose the ABC transporter domain. Residue Gly-34 to Thr-41 participates in ATP binding.

It belongs to the ABC transporter superfamily. Taurine importer (TC 3.A.1.17.1) family. The complex is composed of two ATP-binding proteins (TauB), two transmembrane proteins (TauC) and a solute-binding protein (TauA).

It localises to the cell inner membrane. It carries out the reaction taurine(out) + ATP + H2O = taurine(in) + ADP + phosphate + H(+). In terms of biological role, part of the ABC transporter complex TauABC involved in taurine import. Responsible for energy coupling to the transport system. In Escherichia coli O6:H1 (strain CFT073 / ATCC 700928 / UPEC), this protein is Taurine import ATP-binding protein TauB.